The primary structure comprises 187 residues: Guanylate kinase (187 aa).

Positions 5–183 (GRLTVLTGPS…ALKQLETHMQ (179 aa)) constitute a Guanylate kinase-like domain. 12–19 (GPSGVGKG) provides a ligand contact to ATP.

Belongs to the guanylate kinase family.

Its subcellular location is the cytoplasm. The enzyme catalyses GMP + ATP = GDP + ADP. It catalyses the reaction dZMP + ATP = dZDP + ADP. The protein operates within purine metabolism. Functionally, essential for recycling GMP and indirectly, cGMP. In terms of biological role, (Microbial infection) Catalyzes the phosphorylation of dZMP to dZDP, when the bacterium is infected by a phage that produces the substrate for the synthesis of dZTP (2- amino-2'-deoxyadenosine 5'-triphosphate), which is then used by the phage as a DNA polymerase substrate. The protein is Guanylate kinase of Synechococcus sp. (strain CC9902).